We begin with the raw amino-acid sequence, 316 residues long: SWR complex protein 2 (316 aa).

3 disordered regions span residues 1 to 81, 93 to 127, and 153 to 180; these read MSAT…GEEV, KRKIQKNRAANLQRTLQPPKRPTPSAASEVPKKKY, and ETRLQEAKPRRKYTVSASANRQKGTMTQ. The segment covering 20 to 31 has biased composition (basic and acidic residues); sequence KMRELLEKEHLR. A coiled-coil region spans residues 20–95; the sequence is KMRELLEKEH…RDEERIKKRK (76 aa). Residues 40 to 56 are compositionally biased toward acidic residues; the sequence is EKEDEEYNIEEEEEAER. A phosphoserine mark is found at Ser-64 and Ser-65. The segment covering 70-81 has biased composition (basic and acidic residues); it reads ELKKLEEEGEEV. Polar residues predominate over residues 167-180; sequence VSASANRQKGTMTQ.

The protein belongs to the VPS72/YL1 family. As to quaternary structure, component of the SWR1 chromatin-remodeling complex.

The protein resides in the nucleus. Participates in the catalytic exchange of histone H2A for the H2A variant pht1, an euchromatin-specific factor, leading to chromatin remodeling and changes in transcription of targeted genes. The sequence is that of SWR complex protein 2 (swc2) from Schizosaccharomyces pombe (strain 972 / ATCC 24843) (Fission yeast).